The chain runs to 183 residues: uncharacterized protein (183 aa).

A signal peptide spans 1–17 (MVLFILVLYTCIQDGNG).

This is an uncharacterized protein from Saccharomyces cerevisiae (strain ATCC 204508 / S288c) (Baker's yeast).